Reading from the N-terminus, the 204-residue chain is Large ribosomal subunit protein eL15z (204 aa).

This sequence belongs to the eukaryotic ribosomal protein eL15 family.

The polypeptide is Large ribosomal subunit protein eL15z (SB61) (Picea mariana (Black spruce)).